A 78-amino-acid polypeptide reads, in one-letter code: Neurotoxin 3FTx-LK (78 aa).

The N-terminal stretch at 1–21 is a signal peptide; it reads MKTLLLTLVVVTIVCLDLGYT. Disulfide bonds link C24–C42, C35–C60, C64–C70, and C71–C76.

In terms of tissue distribution, expressed by the venom gland.

The protein resides in the secreted. Functionally, blocks both the muscle-twitch response to nerve stimulation and the response to exogenous acetylcholine. The protein is Neurotoxin 3FTx-LK of Bungarus fasciatus (Banded krait).